We begin with the raw amino-acid sequence, 705 residues long: Dolichyl-diphosphooligosaccharide--protein glycosyltransferase subunit STT3A (705 aa).

Residues 1 to 17 lie on the Cytoplasmic side of the membrane; the sequence is MTKLGFLRLSYEKQDTL. A helical transmembrane segment spans residues 18 to 38; that stretch reads LKLLILSMAAVLSFSTRLFAV. Residues 39 to 119 are Lumenal-facing; the sequence is LRFESVIHEF…IDIRNVCVFL (81 aa). Residues 47–49 carry the DXD motif 1 motif; sequence EFD. D49 serves as a coordination point for Mn(2+). The chain crosses the membrane as a helical span at residues 120-138; that stretch reads APLFSSFTTIVTYHLTKEL. Topologically, residues 139–140 are cytoplasmic; that stretch reads KD. The helical transmembrane segment at 141–158 threads the bilayer; that stretch reads AGAGLLAAAMIAVVPGYI. Topologically, residues 159 to 169 are lumenal; the sequence is SRSVAGSYDNE. D167 and E169 together coordinate Mn(2+). A DXD motif 2 motif is present at residues 167-169; that stretch reads DNE. A helical membrane pass occupies residues 170 to 189; that stretch reads GIAIFCMLLTYYMWIKAVKT. At 190–191 the chain is on the cytoplasmic side; that stretch reads GS. A helical membrane pass occupies residues 192–206; sequence IYWAAKCALAYFYMV. Residues 207–211 are Lumenal-facing; that stretch reads SSWGG. The helical transmembrane segment at 212 to 228 threads the bilayer; the sequence is YVFLINLIPLHVLVLML. At 229–233 the chain is on the cytoplasmic side; the sequence is TGRFS. Residues 234–259 form a helical membrane-spanning segment; the sequence is HRIYVAYCTVYCLGTILSMQISFVGF. The Lumenal segment spans residues 260-267; that stretch reads QPVLSSEH. The helical transmembrane segment at 268 to 287 threads the bilayer; sequence MAAFGVFGLCQIHAFVDYLR. The Cytoplasmic portion of the chain corresponds to 288-300; that stretch reads SKLNPQQFEVLFR. The helical transmembrane segment at 301–321 threads the bilayer; sequence SVISLVGFVLLTIGALLMLTG. Residues 322–356 are Lumenal-facing; the sequence is KISPWTGRFYSLLDPSYAKNNIPIIASVSEHQPTT. Residues 348–351 carry the SVSE motif motif; that stretch reads SVSE. The helical transmembrane segment at 357–379 threads the bilayer; it reads WSSYYFDLQLLVFMFPVGLYYCF. Residues 380 to 385 are Cytoplasmic-facing; sequence SNLSDA. A helical membrane pass occupies residues 386–402; the sequence is RIFIIMYGVTSMYFSAV. Over 403 to 406 the chain is Lumenal; the sequence is MVRL. R405 contacts dolichyl diphosphooligosaccharide. Residues 407–428 form a helical membrane-spanning segment; the sequence is MLVLAPVMCILSGIGVSQVLST. Residues 429-453 are Cytoplasmic-facing; sequence YMKNLDISRQDKKSKKQQDSTYPIK. The chain crosses the membrane as a helical span at residues 454-473; that stretch reads NEVASGMILVMAFFLITYTF. At 474–705 the chain is on the lumenal side; sequence HSTWVTSEAY…DLDNRGLSRT (232 aa). Residues 525–527 form an interacts with target acceptor peptide in protein substrate region; the sequence is WWD. A WWDYG motif motif is present at residues 525-529; sequence WWDYG. A dolichyl diphosphooligosaccharide-binding site is contributed by Y530. Residues N537 and N544 are each glycosylated (N-linked (GlcNAc...) asparagine). Residue N548 is glycosylated (N-linked (GlcNAc...) (high mannose) asparagine). The short motif at 592 to 599 is the DK motif element; it reads DINKFLWM.

Belongs to the STT3 family. As to quaternary structure, component of the oligosaccharyltransferase (OST) complex. There are 2 OST complexes, OST-A and OST-B, which contain STT3A or STT3B as catalytic subunit, respectively. OST-A and OST-B contain common core subunits RPN1, RPN2, OST48, OST4, DAD1 and TMEM258, and OST-A contains DC2/OSTC and KRTCAP2/KCP2 specific accessory subunits. OST-A complex assembly occurs through the formation of 3 subcomplexes. Subcomplex 1 contains RPN1 and TMEM258, subcomplex 2 contains the OST-A-specific subunits STT3A, DC2/OSTC, and KCP2 as well as the core subunit OST4, and subcomplex 3 contains RPN2, DAD1, and OST48. The OST-A complex can form stable complexes with the Sec61 complex or with both the Sec61 and TRAP complexes. It depends on Mg(2+) as a cofactor. Requires Mn(2+) as cofactor.

The protein resides in the endoplasmic reticulum membrane. It catalyses the reaction a di-trans,poly-cis-dolichyl diphosphooligosaccharide + L-asparaginyl-[protein] = N(4)-(oligosaccharide-(1-&gt;4)-N-acetyl-beta-D-glucosaminyl-(1-&gt;4)-N-acetyl-beta-D-glucosaminyl)-L-asparaginyl-[protein] + a di-trans,poly-cis-dolichyl diphosphate + H(+). The protein operates within protein modification; protein glycosylation. Its function is as follows. Catalytic subunit of the oligosaccharyl transferase (OST) complex that catalyzes the initial transfer of a defined glycan (Glc(3)Man(9)GlcNAc(2) in eukaryotes) from the lipid carrier dolichol-pyrophosphate to an asparagine residue within an Asn-X-Ser/Thr consensus motif in nascent polypeptide chains, the first step in protein N-glycosylation. N-glycosylation occurs cotranslationally and the complex associates with the Sec61 complex at the channel-forming translocon complex that mediates protein translocation across the endoplasmic reticulum (ER). All subunits are required for a maximal enzyme activity. This subunit contains the active site and the acceptor peptide and donor lipid-linked oligosaccharide (LLO) binding pockets. STT3A is present in the majority of OST complexes and mediates cotranslational N-glycosylation of most sites on target proteins, while STT3B-containing complexes are required for efficient post-translational glycosylation and mediate glycosylation of sites that have been skipped by STT3A. STT3A-containing OST-A complex is also required to prevent hyperglycosylation of some target proteins by preventing glycosylation of facultative sites before folding of target proteins is completed. The chain is Dolichyl-diphosphooligosaccharide--protein glycosyltransferase subunit STT3A from Bos taurus (Bovine).